Consider the following 110-residue polypeptide: uncharacterized protein (110 aa).

Helical transmembrane passes span isoleucine 5 to leucine 25, phenylalanine 62 to serine 82, and glycine 90 to isoleucine 110.

The protein to A.fulgidus AF1754.

It localises to the cell membrane. This is an uncharacterized protein from Methanocaldococcus jannaschii (strain ATCC 43067 / DSM 2661 / JAL-1 / JCM 10045 / NBRC 100440) (Methanococcus jannaschii).